Here is an 862-residue protein sequence, read N- to C-terminus: Putative PIP5K1A and PSMD4-like protein (862 aa).

One can recognise a PIPK domain in the interval 28–396 (TSSALKGAIQ…WFQRFMCNTV (369 aa)). Disordered regions lie at residues 404–424 (PSPSKKLRSGSSFSQRAGSSG) and 453–481 (HLGCPDVLPQTPPLEEISEGSPTPDPSFS). A compositionally biased stretch (low complexity) spans 412 to 424 (SGSSFSQRAGSSG). A VWFA domain is found at 490-673 (MLTTSVDNSE…LADALISFPI (184 aa)). One can recognise a UIM 1 domain in the interval 696-715 (SADPELALVLRVFMEEQRQR). The tract at residues 716–740 (QEEEARQAAAASAAEAGIATTGTED) is disordered. The segment covering 722–731 (QAAAASAAEA) has biased composition (low complexity). Positions 766 to 783 (MTEEEKIVCAMQMSLQGA) constitute a UIM 2 domain. The interval 826-862 (NLPGVDPNNEAIRNAVGSLASQATKDSKKDKKEEDKK) is disordered. A compositionally biased stretch (basic and acidic residues) spans 850 to 862 (KDSKKDKKEEDKK).

Testis-specific.

It is found in the cytoplasm. Functionally, has negligible PIP5 kinase activity. Binds to ubiquitinated proteins. The protein is Putative PIP5K1A and PSMD4-like protein (PIPSL) of Homo sapiens (Human).